A 355-amino-acid polypeptide reads, in one-letter code: 3-dehydroquinate synthase (355 aa).

NAD(+) is bound by residues 98-102 (GVVGD), 122-123 (TT), Lys-135, Lys-144, and 162-165 (TLDT). Zn(2+) is bound by residues Glu-177, His-240, and His-257.

It belongs to the sugar phosphate cyclases superfamily. Dehydroquinate synthase family. The cofactor is Co(2+). Zn(2+) is required as a cofactor. Requires NAD(+) as cofactor.

The protein localises to the cytoplasm. The enzyme catalyses 7-phospho-2-dehydro-3-deoxy-D-arabino-heptonate = 3-dehydroquinate + phosphate. It participates in metabolic intermediate biosynthesis; chorismate biosynthesis; chorismate from D-erythrose 4-phosphate and phosphoenolpyruvate: step 2/7. Catalyzes the conversion of 3-deoxy-D-arabino-heptulosonate 7-phosphate (DAHP) to dehydroquinate (DHQ). This is 3-dehydroquinate synthase from Dictyoglomus turgidum (strain DSM 6724 / Z-1310).